The primary structure comprises 185 residues: Elongation factor P (185 aa).

It belongs to the elongation factor P family.

It is found in the cytoplasm. The protein operates within protein biosynthesis; polypeptide chain elongation. Functionally, involved in peptide bond synthesis. Stimulates efficient translation and peptide-bond synthesis on native or reconstituted 70S ribosomes in vitro. Probably functions indirectly by altering the affinity of the ribosome for aminoacyl-tRNA, thus increasing their reactivity as acceptors for peptidyl transferase. This is Elongation factor P from Streptococcus uberis (strain ATCC BAA-854 / 0140J).